Here is a 47-residue protein sequence, read N- to C-terminus: PhoP/PhoQ regulator MgrB (47 aa).

The chain crosses the membrane as a helical span at residues 6-26 (WAILLAVLVACLLLWMQTLNV).

The protein belongs to the MgrB family. May form homooligomers. Probably interacts with the periplasmic domain of PhoQ.

It is found in the cell inner membrane. Its function is as follows. PhoP-regulated transcription is redox-sensitive, being activated when the periplasm becomes more reducing. MgrB acts between DsbA/DsbB and PhoP/PhoQ in this pathway. Represses PhoP/PhoQ signaling, possibly by binding to the periplasmic domain of PhoQ, altering its activity and that of downstream effector PhoP. This Cronobacter sakazakii (strain ATCC BAA-894) (Enterobacter sakazakii) protein is PhoP/PhoQ regulator MgrB.